A 314-amino-acid polypeptide reads, in one-letter code: Aspartate carbamoyltransferase catalytic subunit (314 aa).

Carbamoyl phosphate-binding residues include arginine 53 and threonine 54. Lysine 82 provides a ligand contact to L-aspartate. Carbamoyl phosphate contacts are provided by arginine 103, histidine 131, and glutamine 134. Positions 164 and 230 each coordinate L-aspartate. Residues leucine 267 and proline 268 each contribute to the carbamoyl phosphate site.

Belongs to the aspartate/ornithine carbamoyltransferase superfamily. ATCase family. As to quaternary structure, heterooligomer of catalytic and regulatory chains.

The catalysed reaction is carbamoyl phosphate + L-aspartate = N-carbamoyl-L-aspartate + phosphate + H(+). It functions in the pathway pyrimidine metabolism; UMP biosynthesis via de novo pathway; (S)-dihydroorotate from bicarbonate: step 2/3. Functionally, catalyzes the condensation of carbamoyl phosphate and aspartate to form carbamoyl aspartate and inorganic phosphate, the committed step in the de novo pyrimidine nucleotide biosynthesis pathway. The chain is Aspartate carbamoyltransferase catalytic subunit from Methanococcus aeolicus (strain ATCC BAA-1280 / DSM 17508 / OCM 812 / Nankai-3).